The primary structure comprises 225 residues: MMYHIPGVLSPQDVARFREQLEQAEWVDGRVTTGAQGAQVKNNQQVDTRSTLYAALQNEVLNAVNQHALFFAAALPRTLSTPLFNRYQNNETYGFHVDGAVRSHPQNGWMRTDLSATLFLSDPQSYDGGELVVNDTFGQHRVKLPAGDLVLYPSSSQHCVPPVTRGVRVASFMWIQSMIRDDKKRAMLFELDNNIQSLKSRYGESEEILSLLNLYHNLLREWSEI.

The 100-residue stretch at 78 to 177 (TLSTPLFNRY…RVASFMWIQS (100 aa)) folds into the Fe2OG dioxygenase domain. Fe cation contacts are provided by His96, Asp98, and His158. 2-oxoglutarate is bound at residue Arg168.

It depends on Fe(2+) as a cofactor. The cofactor is L-ascorbate.

The chain is PKHD-type hydroxylase YbiX from Shigella sonnei (strain Ss046).